A 449-amino-acid polypeptide reads, in one-letter code: Tubulin alpha chain (449 aa).

Residues glutamine 11, glutamate 71, serine 140, glycine 144, threonine 145, threonine 179, asparagine 206, and asparagine 228 each contribute to the GTP site. Glutamate 71 lines the Mg(2+) pocket. Residue glutamate 254 is part of the active site.

The protein belongs to the tubulin family. In terms of assembly, dimer of alpha and beta chains. A typical microtubule is a hollow water-filled tube with an outer diameter of 25 nm and an inner diameter of 15 nM. Alpha-beta heterodimers associate head-to-tail to form protofilaments running lengthwise along the microtubule wall with the beta-tubulin subunit facing the microtubule plus end conferring a structural polarity. Microtubules usually have 13 protofilaments but different protofilament numbers can be found in some organisms and specialized cells. Mg(2+) is required as a cofactor.

The protein resides in the cytoplasm. It is found in the cytoskeleton. It catalyses the reaction GTP + H2O = GDP + phosphate + H(+). Functionally, tubulin is the major constituent of microtubules, a cylinder consisting of laterally associated linear protofilaments composed of alpha- and beta-tubulin heterodimers. Microtubules grow by the addition of GTP-tubulin dimers to the microtubule end, where a stabilizing cap forms. Below the cap, tubulin dimers are in GDP-bound state, owing to GTPase activity of alpha-tubulin. The polypeptide is Tubulin alpha chain (TUB1) (Pneumocystis carinii).